Consider the following 399-residue polypeptide: Glucose-1-phosphate adenylyltransferase (399 aa).

Alpha-D-glucose 1-phosphate is bound by residues Y100, G165, 180-181 (EK), and S191.

This sequence belongs to the bacterial/plant glucose-1-phosphate adenylyltransferase family. In terms of assembly, homotetramer.

It carries out the reaction alpha-D-glucose 1-phosphate + ATP + H(+) = ADP-alpha-D-glucose + diphosphate. Its pathway is glycan biosynthesis; glycogen biosynthesis. Functionally, involved in the biosynthesis of ADP-glucose, a building block required for the elongation reactions to produce glycogen. Catalyzes the reaction between ATP and alpha-D-glucose 1-phosphate (G1P) to produce pyrophosphate and ADP-Glc. This is Glucose-1-phosphate adenylyltransferase from Desulforamulus reducens (strain ATCC BAA-1160 / DSM 100696 / MI-1) (Desulfotomaculum reducens).